We begin with the raw amino-acid sequence, 1026 residues long: Glutactin (1026 aa).

An N-terminal signal peptide occupies residues 1-17; sequence MKPLLLVLALCGAQVHA. Tyr-26 and Tyr-29 each carry sulfotyrosine. N-linked (GlcNAc...) asparagine glycosylation is present at Asn-115. An intrachain disulfide couples Cys-123 to Cys-145. Sulfotyrosine is present on Tyr-182. A disulfide bridge connects residues Cys-298 and Cys-316. N-linked (GlcNAc...) asparagine glycosylation is found at Asn-368 and Asn-402. Tyr-559 bears the Sulfotyrosine mark. The interval 601 to 641 is disordered; that stretch reads PITTTTTTTTTTTTTSRPYAYNPYANWQNRPSQQHPNWHPA. The segment covering 603–615 has biased composition (low complexity); that stretch reads TTTTTTTTTTTTT. The segment covering 625 to 636 has biased composition (polar residues); that stretch reads ANWQNRPSQQHP. Tyr-645 is subject to Sulfotyrosine. Disordered stretches follow at residues 659 to 695 and 723 to 1026; these read EREQ…REQE and EREQ…NSRN. Over residues 723 to 752 the composition is skewed to basic and acidic residues; the sequence is EREQYEREQQEREQREREELERQQREREQQ. Sulfotyrosine is present on Tyr-727. Asn-810 is a glycosylation site (N-linked (GlcNAc...) asparagine). A compositionally biased stretch (basic and acidic residues) spans 811-854; sequence FSEEDREQQQQEQLRREQQEQQEREYQLQLEREQQEREQQERGQ. A sulfotyrosine mark is found at Tyr-836, Tyr-862, Tyr-865, Tyr-868, Tyr-922, and Tyr-928. Low complexity predominate over residues 855 to 866; that stretch reads QEPGPEEYPSYE. Basic and acidic residues predominate over residues 867–893; that stretch reads EYSRALQEKNAERDRIYAEEQERERQQ. A compositionally biased stretch (basic and acidic residues) spans 923-944; sequence DGDRSYAEEQEREQQRRDQVEQ. A compositionally biased stretch (acidic residues) spans 945–969; sequence EREEQPDEDQGEEYERSPDEEEAAE. A sulfotyrosine mark is found at Tyr-981, Tyr-984, and Tyr-1006. Basic and acidic residues predominate over residues 1002 to 1026; it reads EEERYRAQQEEEDRIQAERERNSRN.

The protein in the N-terminal section; belongs to the type-B carboxylesterase/lipase family. Extensively O-glycosylated and also N-glycosylated. Post-translationally, about four tyrosines are sulfated.

The protein resides in the secreted. It is found in the extracellular space. It localises to the extracellular matrix. The protein localises to the basement membrane. In terms of biological role, not known. Binds calcium ions. This Drosophila melanogaster (Fruit fly) protein is Glutactin (Glt).